A 188-amino-acid polypeptide reads, in one-letter code: Cell division protein ZapC (188 aa).

It belongs to the ZapC family. Interacts directly with FtsZ.

It localises to the cytoplasm. Its function is as follows. Contributes to the efficiency of the cell division process by stabilizing the polymeric form of the cell division protein FtsZ. Acts by promoting interactions between FtsZ protofilaments and suppressing the GTPase activity of FtsZ. This chain is Cell division protein ZapC, found in Psychromonas ingrahamii (strain DSM 17664 / CCUG 51855 / 37).